The chain runs to 258 residues: Mediator of RNA polymerase II transcription subunit 7 (258 aa).

Disordered stretches follow at residues 1-39 (MLPG…PPPH) and 202-243 (EKET…PPSV). Over residues 203–217 (KETEEDEEMKEDDEE) the composition is skewed to acidic residues. Polar residues predominate over residues 220–229 (STSSSEGNQK).

Belongs to the Mediator complex subunit 7 family. Component of the Mediator complex.

It localises to the nucleus. Functionally, component of the Mediator complex, a coactivator involved in the regulated transcription of nearly all RNA polymerase II-dependent genes. Mediator functions as a bridge to convey information from gene-specific regulatory proteins to the basal RNA polymerase II transcription machinery. Mediator is recruited to promoters by direct interactions with regulatory proteins and serves as a scaffold for the assembly of a functional preinitiation complex with RNA polymerase II and the general transcription factors. The protein is Mediator of RNA polymerase II transcription subunit 7 (let-49) of Caenorhabditis briggsae.